Here is a 242-residue protein sequence, read N- to C-terminus: Prosalusin (242 aa).

A signal peptide spans 1 to 26 (MAAATRGCRPWGSLLGLLGLVSAAAA). A propeptide spanning residues 27 to 189 (AWDLASLRCT…SSWVVYGTNY (163 aa)) is cleaved from the precursor. 93 to 100 (GWTGTGKS) lines the ATP pocket. N-linked (GlcNAc...) asparagine glycosylation occurs at Asn-149. A disordered region spans residues 210–242 (PPRRSGALPPAPAAPRPALRAQRAGPAGPGAKG). Residues 225–235 (RPALRAQRAGP) are compositionally biased toward low complexity. Lys-241 carries the lysine amide modification.

It belongs to the ClpA/ClpB family. Torsin subfamily. Post-translationally, amidation of salusin-alpha(29-Gly) by peptidylglycine alpha-amidating monooxygenase, PAM, converts Lys-241-Gly-242 to Lys-241-NH2 and gives raise to salusin-alpha. In terms of tissue distribution, isoform 4 is ubiquitously expressed, with high level in vascular endothelial cells and vascular smooth muscle cells.

Its subcellular location is the secreted. Its function is as follows. Salusins -alpha and -beta may be endocrine and/or paracrine factors able to increase intracellular calcium concentrations and induce cell mitogenesis. Salusins may also be potent hypotensive peptides. The chain is Prosalusin (TOR2A) from Homo sapiens (Human).